The following is an 871-amino-acid chain: Transient receptor potential cation channel subfamily V member 4 (871 aa).

Positions 1 to 68 (MADSSEGPRA…GPGDGRPNLR (68 aa)) are disordered. Residues 1-469 (MADSSEGPRA…RDKWRKFGAV (469 aa)) lie on the Cytoplasmic side of the membrane. The residue at position 110 (Tyr-110) is a Phosphotyrosine. ATP is bound by residues Lys-192, Lys-197, Asn-201, 236–239 (YRGQ), and Arg-248. ANK repeat units follow at residues 237–266 (RGQT…DVHA) and 284–313 (FGEL…KKAD). Residue 249-251 (RCK) coordinates a 1,2-diacyl-sn-glycero-3-phospho-(1D-myo-inositol-4,5-bisphosphate). Tyr-253 is subject to Phosphotyrosine. A 1,2-diacyl-sn-glycero-3-phospho-(1D-myo-inositol-4,5-bisphosphate) contacts are provided by residues 296 to 299 (NQPH) and Lys-344. Residues 369 to 398 (DGLSPLMMAAKTGKIGIFQHIIRREVTDED) form an ANK 3 repeat. The chain crosses the membrane as a helical span at residues 470 to 490 (SFYINVVSYLCAMVIFTLTAY). Residues 491–507 (YQPLEGTPPYPYRTTVD) are Extracellular-facing. The chain crosses the membrane as a helical span at residues 508-534 (YLRLAGEVITLFTGVLFFFTNIKDLFM). At 535–547 (KKCPGVNSLFIDG) the chain is on the cytoplasmic side. A helical membrane pass occupies residues 548 to 568 (SFQLLYFIYSVLVIVSAALYL). Residues 569 to 572 (AGIE) lie on the Extracellular side of the membrane. The helical transmembrane segment at 573–593 (AYLAVMVFALVLGWMNALYFT) threads the bilayer. Residues 594 to 608 (RGLKLTGTYSIMIQK) are Cytoplasmic-facing. The chain crosses the membrane as a helical span at residues 609 to 636 (ILFKDLFRFLLVYLLFMIGYASALVSLL). The Extracellular portion of the chain corresponds to 637–665 (NPCANMKVCNEDQTNCTVPTYPSCRDSET). Positions 666–685 (FSTFLLDLFKLTIGMGDLEM) form an intramembrane region, pore-forming. Positions 679 to 682 (GMGD) match the Selectivity filter motif. Asp-682 serves as a coordination point for Ca(2+). The Extracellular segment spans residues 686–693 (LSSTKYPV). A helical membrane pass occupies residues 694–722 (VFIILLVTYIILTFVLLLNMLIALMGETV). At 723-871 (GQVSKESKHI…RKWRTDDAPL (149 aa)) the chain is on the cytoplasmic side. At Tyr-805 the chain carries Phosphotyrosine. The tract at residues 812 to 831 (HTVGRLRRDRWSSVVPRVVE) is interaction with calmodulin and ITPR3. Residue Ser-824 is modified to Phosphoserine. The disordered stretch occupies residues 849 to 871 (GNPRCDGHQQGYPRKWRTDDAPL).

This sequence belongs to the transient receptor (TC 1.A.4) family. TrpV subfamily. TRPV4 sub-subfamily. Homotetramer. Self-associates in an isoform-specific manner. Isoform 1 and isoform 5 can oligomerize, but isoform 2, isoform 4 and isoform 6 cannot oligomerize. Interacts with calmodulin. Interacts with Map7 and Src family Tyr protein kinases LYN, SRC, FYN, HCK, LCK and YES. Interacts with CTNNB1. The TRPV4 and CTNNB1 complex can interact with CDH1. Interacts with PACSIN1, PACSIN2 and PACSIN3 (via SH3 domain). Part of a complex containing MLC1, AQP4, HEPACAM and ATP1B1. Interacts with ITPR3. Interacts with AQP5; the interaction is probably indirect and regulates TRPV4 activation by hypotonicity. Interacts with ANO1. Interacts (via C-terminus) with PKD2 (via C-terminus). Interacts with DDX3X; this interaction is decreased when the channel is activated. In terms of processing, N-glycosylated. As to expression, found in the synoviocytes from patients with (RA) and without (CTR) rheumatoid arthritis (at protein level).

Its subcellular location is the cell membrane. It localises to the apical cell membrane. The protein localises to the cell junction. The protein resides in the adherens junction. It is found in the cell projection. Its subcellular location is the cilium. It localises to the endoplasmic reticulum. The enzyme catalyses Ca(2+)(in) = Ca(2+)(out). Channel activation is inhibited by binding to phosphatidylinositol-4,5-bisphosphate, and to a much lesser degree by phosphatidylinositol-3,4,5-trisphosphate. Not inhibited by phosphatidylinositol-3,4-bisphosphate and phosphatidylinositol-3,5-bisphosphate. Functionally, non-selective calcium permeant cation channel involved in osmotic sensitivity and mechanosensitivity. Activation by exposure to hypotonicity within the physiological range exhibits an outward rectification. Also activated by heat, low pH, citrate and phorbol esters. Increase of intracellular Ca(2+) potentiates currents. Channel activity seems to be regulated by a calmodulin-dependent mechanism with a negative feedback mechanism. Promotes cell-cell junction formation in skin keratinocytes and plays an important role in the formation and/or maintenance of functional intercellular barriers. Acts as a regulator of intracellular Ca(2+) in synoviocytes. Plays an obligatory role as a molecular component in the nonselective cation channel activation induced by 4-alpha-phorbol 12,13-didecanoate and hypotonic stimulation in synoviocytes and also regulates production of IL-8. Together with PKD2, forms mechano- and thermosensitive channels in cilium. Negatively regulates expression of PPARGC1A, UCP1, oxidative metabolism and respiration in adipocytes. Regulates expression of chemokines and cytokines related to pro-inflammatory pathway in adipocytes. Together with AQP5, controls regulatory volume decrease in salivary epithelial cells. Required for normal development and maintenance of bone and cartilage. In its inactive state, may sequester DDX3X at the plasma membrane. When activated, the interaction between both proteins is affected and DDX3X relocalizes to the nucleus. In neurons of the central nervous system, could play a role in triggering voluntary water intake in response to increased sodium concentration in body fluid. In terms of biological role, non-selective calcium permeant cation channel involved in osmotic sensitivity and mechanosensitivity. Activation by exposure to hypotonicity within the physiological range exhibits an outward rectification. Also activated by phorbol esters. Has the same channel activity as isoform 1, and is activated by the same stimuli. Its function is as follows. Lacks channel activity, due to impaired oligomerization and intracellular retention. (Microbial infection) Facilitates hepatitis C virus (HCV) replication, possibly through its action on DDX3X. Functionally, (Microbial infection) Facilitates Dengue virus (DENV) replication, possibly through its action on DDX3X. In terms of biological role, (Microbial infection) Facilitates Zika virus (ZIKV) replication, possibly through its action on DDX3X. The chain is Transient receptor potential cation channel subfamily V member 4 (TRPV4) from Homo sapiens (Human).